The sequence spans 181 residues: Large ribosomal subunit protein uL5 (181 aa).

Belongs to the universal ribosomal protein uL5 family. In terms of assembly, part of the 50S ribosomal subunit; contacts the 5S rRNA and probably tRNA. Forms a bridge to the 30S subunit in the 70S ribosome.

Its function is as follows. This is one of the proteins that bind and probably mediate the attachment of the 5S RNA into the large ribosomal subunit, where it forms part of the central protuberance. In the 70S ribosome it contacts protein S13 of the 30S subunit (bridge B1b), connecting the 2 subunits; this bridge is implicated in subunit movement. May contact the P site tRNA; the 5S rRNA and some of its associated proteins might help stabilize positioning of ribosome-bound tRNAs. In Methanococcus vannielii, this protein is Large ribosomal subunit protein uL5.